Consider the following 182-residue polypeptide: Epoxyqueuosine reductase QueH (182 aa).

4 residues coordinate [4Fe-4S] cluster: Cys-10, Cys-11, Cys-85, and Cys-88. Cys-165 and Cys-167 are joined by a disulfide.

This sequence belongs to the QueH family.

The catalysed reaction is epoxyqueuosine(34) in tRNA + AH2 = queuosine(34) in tRNA + A + H2O. Its pathway is tRNA modification; tRNA-queuosine biosynthesis. Catalyzes the conversion of epoxyqueuosine (oQ) to queuosine (Q), which is a hypermodified base found in the wobble positions of tRNA(Asp), tRNA(Asn), tRNA(His) and tRNA(Tyr). In Dehalococcoides mccartyi (strain ATCC BAA-2266 / KCTC 15142 / 195) (Dehalococcoides ethenogenes (strain 195)), this protein is Epoxyqueuosine reductase QueH.